A 248-amino-acid chain; its full sequence is Kallikrein-12 (248 aa).

The N-terminal stretch at 1–17 is a signal peptide; the sequence is MGLSIFLLLCVLGLSQA. Residues 22-246 enclose the Peptidase S1 domain; sequence IFNGTECGRN…YVDWIRMIMR (225 aa). An N-linked (GlcNAc...) asparagine glycan is attached at Asn24. Disulfide bonds link Cys28/Cys161, Cys47/Cys63, Cys133/Cys235, Cys140/Cys206, Cys172/Cys186, and Cys196/Cys222. Catalysis depends on charge relay system residues His62 and Asp108. Asn163 carries an N-linked (GlcNAc...) asparagine glycan. Ser200 acts as the Charge relay system in catalysis.

It belongs to the peptidase S1 family. Kallikrein subfamily.

The protein localises to the secreted. This Homo sapiens (Human) protein is Kallikrein-12 (KLK12).